The primary structure comprises 632 residues: Thioredoxin domain-containing protein C959.05c (632 aa).

The signal sequence occupies residues 1 to 22 (MKLFLYHFTFIVYYFIISFSYA). 3 N-linked (GlcNAc...) asparagine glycosylation sites follow: asparagine 35, asparagine 41, and asparagine 140. Positions 153-284 (SDSSSTDPAF…LLSYSNQVAS (132 aa)) constitute a Thioredoxin domain. Cysteine 209 and cysteine 212 are disulfide-bonded. The N-linked (GlcNAc...) asparagine glycan is linked to asparagine 557. A helical membrane pass occupies residues 583–603 (LIVFNLLIALLILSILTIISA).

This sequence belongs to the protein disulfide isomerase family.

The protein resides in the endoplasmic reticulum membrane. The catalysed reaction is Catalyzes the rearrangement of -S-S- bonds in proteins.. Functionally, acts as a membrane-bound chaperone in endoplasmic reticulum quality control. Probably facilitates presentation of substrate to membrane-bound components of the degradation machinery. The polypeptide is Thioredoxin domain-containing protein C959.05c (Schizosaccharomyces pombe (strain 972 / ATCC 24843) (Fission yeast)).